Consider the following 341-residue polypeptide: Uroporphyrinogen decarboxylase (341 aa).

Substrate-binding positions include 25-29, F44, D74, Y151, S206, and H318; that span reads RQAGR.

The protein belongs to the uroporphyrinogen decarboxylase family. In terms of assembly, homodimer.

The protein resides in the cytoplasm. It carries out the reaction uroporphyrinogen III + 4 H(+) = coproporphyrinogen III + 4 CO2. The protein operates within porphyrin-containing compound metabolism; protoporphyrin-IX biosynthesis; coproporphyrinogen-III from 5-aminolevulinate: step 4/4. Its function is as follows. Catalyzes the decarboxylation of four acetate groups of uroporphyrinogen-III to yield coproporphyrinogen-III. The chain is Uroporphyrinogen decarboxylase from Flavobacterium johnsoniae (strain ATCC 17061 / DSM 2064 / JCM 8514 / BCRC 14874 / CCUG 350202 / NBRC 14942 / NCIMB 11054 / UW101) (Cytophaga johnsonae).